The chain runs to 141 residues: Elongation factor G, chloroplastic (141 aa).

One can recognise a tr-type G domain in the interval 12-141; that stretch reads KDYRNIGIMA…VPRICFVNKM (130 aa). Residues 21-28 and 85-89 each bind GTP; these read AHIDAGKT and DTPGH.

It belongs to the TRAFAC class translation factor GTPase superfamily. Classic translation factor GTPase family. EF-G/EF-2 subfamily.

The protein resides in the plastid. Its subcellular location is the chloroplast. Its pathway is protein biosynthesis; polypeptide chain elongation. Chloroplast-localized elongation factor EF-G involved in protein synthesis in plastids. Catalyzes the GTP-dependent ribosomal translocation step during translation elongation. During this step, the ribosome changes from the pre-translocational (PRE) to the post-translocational (POST) state as the newly formed A-site-bound peptidyl-tRNA and P-site-bound deacylated tRNA move to the P and E sites, respectively. Catalyzes the coordinated movement of the two tRNA molecules, the mRNA and conformational changes in the ribosome. The polypeptide is Elongation factor G, chloroplastic (fusA) (Pisum sativum (Garden pea)).